The sequence spans 358 residues: Cilia- and flagella-associated protein 263 (358 aa).

Coiled coils occupy residues 93–138, 176–200, and 266–343; these read YKKM…FKRN, RKNS…EMAE, and RTKL…YTKS.

This sequence belongs to the CFAP263 family. Forms a complex with CFAP184; the interaction is required for functional activity in cilia. Interacts with HAP1 and PCM1.

It localises to the cytoplasm. The protein localises to the cytoskeleton. The protein resides in the microtubule organizing center. Its subcellular location is the centrosome. It is found in the centriolar satellite. It localises to the cell projection. The protein localises to the cilium. Functionally, component of centriolar satellites contributing to primary cilium formation. In complex with CFAP263, acts as a regulator of ciliary beating that connects radial spoke 3 (RS3) to the inner dynein arm (IDA) and the nexin-dynein regulatory complex (N-DRC). The complex is positioned parallel to N-DRC and forms a connection between the arch at the base of RS3, the IDA tail and N-DRC. This Danio rerio (Zebrafish) protein is Cilia- and flagella-associated protein 263 (cfap263).